Reading from the N-terminus, the 307-residue chain is Elongation factor Ts (307 aa).

The interval 80–83 (TDFV) is involved in Mg(2+) ion dislocation from EF-Tu.

It belongs to the EF-Ts family.

It is found in the cytoplasm. Its function is as follows. Associates with the EF-Tu.GDP complex and induces the exchange of GDP to GTP. It remains bound to the aminoacyl-tRNA.EF-Tu.GTP complex up to the GTP hydrolysis stage on the ribosome. The chain is Elongation factor Ts from Clostridium botulinum (strain Loch Maree / Type A3).